We begin with the raw amino-acid sequence, 40 residues long: Alpha-conotoxin-like Lp1.6b (40 aa).

The propeptide occupies 1-23 (VVLGPASDGRNAAANNKASDLIR). Gln-24 is modified (pyrrolidone carboxylic acid). 2 disulfides stabilise this stretch: Cys-26–Cys-32 and Cys-27–Cys-39.

It belongs to the conotoxin A superfamily. In terms of tissue distribution, expressed by the venom duct.

It localises to the secreted. Its function is as follows. Alpha-conotoxins act on postsynaptic membranes, they bind to the nicotinic acetylcholine receptors (nAChR) and thus inhibit them. This is Alpha-conotoxin-like Lp1.6b from Conus leopardus (Leopard cone).